A 333-amino-acid polypeptide reads, in one-letter code: Glyceraldehyde-3-phosphate dehydrogenase (333 aa).

Residues 11 to 12 (RI), Asp-32, and Arg-77 contribute to the NAD(+) site. D-glyceraldehyde 3-phosphate is bound by residues 148-150 (SCT), Thr-179, 208-209 (TG), and Arg-231. Catalysis depends on Cys-149, which acts as the Nucleophile. Asn-313 serves as a coordination point for NAD(+).

The protein belongs to the glyceraldehyde-3-phosphate dehydrogenase family. As to quaternary structure, homotetramer.

It is found in the cytoplasm. The enzyme catalyses D-glyceraldehyde 3-phosphate + phosphate + NAD(+) = (2R)-3-phospho-glyceroyl phosphate + NADH + H(+). The protein operates within carbohydrate degradation; glycolysis; pyruvate from D-glyceraldehyde 3-phosphate: step 1/5. The chain is Glyceraldehyde-3-phosphate dehydrogenase (Gapdh) from Glossina morsitans morsitans (Savannah tsetse fly).